The sequence spans 167 residues: C-X-C motif chemokine 15 (167 aa).

Positions 1–25 (MAAQGWSMLLLAVLNLGIFVRPCDT) are cleaved as a signal peptide. Intrachain disulfides connect C30-C57 and C32-C73. S157 bears the Phosphoserine mark.

It belongs to the intercrine alpha (chemokine CxC) family. Expression restricted to the lung, produced by bronchoepithelial cells and is released into the airways. Expressed at low levels in fetal lung.

The protein resides in the secreted. Chemotactic for neutrophils. Involved in lung-specific neutrophil trafficking during normal and inflammatory conditions. The polypeptide is C-X-C motif chemokine 15 (Cxcl15) (Mus musculus (Mouse)).